The sequence spans 559 residues: 2-isopropylmalate synthase (559 aa).

The Pyruvate carboxyltransferase domain maps to 33-307 (PIWCSSDLRD…DPQLDFSDID (275 aa)). The Mg(2+) site is built by Asp42, His246, His248, and Asn282. The segment at 439 to 559 (ANTPYALVSH…SLSQQEAKAA (121 aa)) is regulatory domain.

The protein belongs to the alpha-IPM synthase/homocitrate synthase family. LeuA type 2 subfamily. In terms of assembly, homodimer. Requires Mg(2+) as cofactor.

It localises to the cytoplasm. The enzyme catalyses 3-methyl-2-oxobutanoate + acetyl-CoA + H2O = (2S)-2-isopropylmalate + CoA + H(+). It functions in the pathway amino-acid biosynthesis; L-leucine biosynthesis; L-leucine from 3-methyl-2-oxobutanoate: step 1/4. Functionally, catalyzes the condensation of the acetyl group of acetyl-CoA with 3-methyl-2-oxobutanoate (2-ketoisovalerate) to form 3-carboxy-3-hydroxy-4-methylpentanoate (2-isopropylmalate). This is 2-isopropylmalate synthase from Pseudomonas fluorescens (strain SBW25).